The sequence spans 440 residues: MGIKNLKSVLLLKHSLKVLDSAVKSKEIYVDFLGLFMAIAYSVTSTAMLHHIIKEKFKFIHSIADNVTVFVDRGSISLKTSLREKRKQSLKNQYKRKQEELKNLEIAIDNLSVDDEMYEEQKESLFSKIDKNSYYMFLADKKNMEAIITDVLASLKNTEIYYCDHIDAEFMMCCRAREYYTNNGTWPSILSSDQDTICLVCVDTQEKILYDTKSVYKLSPNKYTSYLTKLIVLTNGCDFFRGLYGISINKDNYMRYELFTEFNRENAFRSIAHKNYSLNNSNTDENIDEISTNIDVIFDFINHYTSLNEDAYKFEDLPDIRVKDFLDVMVRSKWYEAKNKYDLGSDILQNIYNVYKVHRRNYEKEKETNILKMIESYKYRNIKINTITTFIKLLGIETSDSICVLGILAPSELYIGFEGRFYFNKTSIIKSSPKLININI.

Belongs to the poxviruses G5 family.

The chain is Protein FPV117 from Fowlpox virus (strain NVSL) (FPV).